The chain runs to 486 residues: NADH-quinone oxidoreductase subunit N (486 aa).

A run of 13 helical transmembrane segments spans residues Ile5 to Leu25, Leu41 to Phe61, Gly77 to Met97, Ser118 to Leu138, Tyr165 to Gly185, Phe209 to Phe229, Thr245 to Ala265, Leu275 to Ile295, Ile304 to Val324, Val335 to Met355, Ala380 to Phe400, Gly413 to Leu433, and Val458 to Phe478.

Belongs to the complex I subunit 2 family. NDH-1 is composed of 14 different subunits. Subunits NuoA, H, J, K, L, M, N constitute the membrane sector of the complex.

It localises to the cell inner membrane. It carries out the reaction a quinone + NADH + 5 H(+)(in) = a quinol + NAD(+) + 4 H(+)(out). Its function is as follows. NDH-1 shuttles electrons from NADH, via FMN and iron-sulfur (Fe-S) centers, to quinones in the respiratory chain. The immediate electron acceptor for the enzyme in this species is believed to be ubiquinone. Couples the redox reaction to proton translocation (for every two electrons transferred, four hydrogen ions are translocated across the cytoplasmic membrane), and thus conserves the redox energy in a proton gradient. This chain is NADH-quinone oxidoreductase subunit N, found in Bdellovibrio bacteriovorus (strain ATCC 15356 / DSM 50701 / NCIMB 9529 / HD100).